The primary structure comprises 498 residues: PE-PGRS family protein PE_PGRS33 (498 aa).

Residues 1-30 are essential for translocation to the cell surface; the sequence is MSFVVTIPEALAAVATDLAGIGSTIGTANA. Positions 1-93 constitute a PE domain; sequence MSFVVTIPEA…AGSYAAAEAA (93 aa). Residues 140 to 260 form an interacts with TLR2 region; it reads GNGGAGGSGA…GLFFGVGGAG (121 aa).

This sequence belongs to the mycobacterial PE family. PGRS subfamily. Interacts with human TLR2.

It localises to the secreted. It is found in the cell wall. The protein localises to the cell surface. The protein resides in the cell outer membrane. Binding of Ca(2+) to PE_PGRS33 induces conformational changes and increases affinity for TLR2. Induces TNF-alpha release through human Toll-like receptor 2 (TLR2) signaling pathway, leading to macrophage apoptosis. The signaling pathway involves TLR2-dependent activation of the mitogen-activated protein kinase kinase kinase 5 (ASK1), which activates the p38 and JNK MAPKs, leading to enhanced expression of TNF-alpha and tumor necrosis factor receptor superfamily member 1A (TNFRI) genes. Signals are amplified through classical caspase 8-dependent mitochondrial release of cytochrome c, leading to the activation of caspases 9 and 3. Mediates Ca(2+)-dependent up-regulation of the anti-inflammatory cytokine IL-10. Mediates entry into macrophages in a TLR2-dependent mechanism and activates the TLR2-dependent pro-adhesive pathway. In Mycobacterium tuberculosis (strain ATCC 25618 / H37Rv), this protein is PE-PGRS family protein PE_PGRS33.